Consider the following 262-residue polypeptide: Small ribosomal subunit protein eS1 (262 aa).

The protein belongs to the eukaryotic ribosomal protein eS1 family. In terms of assembly, component of the small ribosomal subunit. Mature ribosomes consist of a small (40S) and a large (60S) subunit. The 40S subunit contains about 33 different proteins and 1 molecule of RNA (18S). The 60S subunit contains about 49 different proteins and 3 molecules of RNA (25S, 5.8S and 5S).

Its subcellular location is the cytoplasm. This chain is Small ribosomal subunit protein eS1, found in Theileria parva (East coast fever infection agent).